Consider the following 363-residue polypeptide: Phosphoserine aminotransferase (363 aa).

Arg42 lines the L-glutamate pocket. Residues Gly76–Arg77, Trp102, Thr156, Asp175, and Gln198 each bind pyridoxal 5'-phosphate. Residue Lys199 is modified to N6-(pyridoxal phosphate)lysine. Asn240–Thr241 is a binding site for pyridoxal 5'-phosphate.

Belongs to the class-V pyridoxal-phosphate-dependent aminotransferase family. SerC subfamily. Homodimer. The cofactor is pyridoxal 5'-phosphate.

The protein localises to the cytoplasm. The enzyme catalyses O-phospho-L-serine + 2-oxoglutarate = 3-phosphooxypyruvate + L-glutamate. It catalyses the reaction 4-(phosphooxy)-L-threonine + 2-oxoglutarate = (R)-3-hydroxy-2-oxo-4-phosphooxybutanoate + L-glutamate. The protein operates within amino-acid biosynthesis; L-serine biosynthesis; L-serine from 3-phospho-D-glycerate: step 2/3. It participates in cofactor biosynthesis; pyridoxine 5'-phosphate biosynthesis; pyridoxine 5'-phosphate from D-erythrose 4-phosphate: step 3/5. Functionally, catalyzes the reversible conversion of 3-phosphohydroxypyruvate to phosphoserine and of 3-hydroxy-2-oxo-4-phosphonooxybutanoate to phosphohydroxythreonine. The polypeptide is Phosphoserine aminotransferase (Shewanella sp. (strain MR-7)).